Here is a 288-residue protein sequence, read N- to C-terminus: Glycine--tRNA ligase alpha subunit (288 aa).

This sequence belongs to the class-II aminoacyl-tRNA synthetase family. As to quaternary structure, tetramer of two alpha and two beta subunits.

The protein resides in the cytoplasm. The enzyme catalyses tRNA(Gly) + glycine + ATP = glycyl-tRNA(Gly) + AMP + diphosphate. The polypeptide is Glycine--tRNA ligase alpha subunit (Rickettsia massiliae (strain Mtu5)).